We begin with the raw amino-acid sequence, 187 residues long: Calcium and integrin-binding family member 2 (187 aa).

EF-hand domains follow at residues 66 to 101 (KENP…LSEM), 103 to 138 (PREL…LTKE), and 144 to 179 (EVNL…APDF). The Ca(2+) site is built by Asp-157, Asp-159, Asp-161, Lys-163, and Asp-168.

In terms of assembly, monomer. Homodimer. As to expression, enriched in central and striolar hair cells.

It is found in the cytoplasm. Its subcellular location is the cell projection. The protein localises to the stereocilium. It localises to the photoreceptor inner segment. The protein resides in the cilium. It is found in the photoreceptor outer segment. Its subcellular location is the cell membrane. The protein localises to the sarcolemma. Calcium- and integrin-binding protein. Plays a role in intracellular calcium homeostasis. Critical for proper photoreceptor cell maintenance and function. Essential for development, maintenance and function of mechanosensory hair cells. This chain is Calcium and integrin-binding family member 2, found in Danio rerio (Zebrafish).